Consider the following 493-residue polypeptide: Trigger factor (493 aa).

In terms of domain architecture, PPIase FKBP-type spans 162–243 (GDFVSLDLSA…VRGVKEKELP (82 aa)). The segment at 432–493 (ELALPARPAP…AAVDSGDRDI (62 aa)) is disordered. A compositionally biased stretch (basic and acidic residues) spans 449 to 470 (HAGHDHEGHDHADHAGHDHAGD). The span at 474–485 (AEPAEAPAATAA) shows a compositional bias: low complexity.

It belongs to the FKBP-type PPIase family. Tig subfamily.

It is found in the cytoplasm. The catalysed reaction is [protein]-peptidylproline (omega=180) = [protein]-peptidylproline (omega=0). Functionally, involved in protein export. Acts as a chaperone by maintaining the newly synthesized protein in an open conformation. Functions as a peptidyl-prolyl cis-trans isomerase. The sequence is that of Trigger factor from Frankia alni (strain DSM 45986 / CECT 9034 / ACN14a).